Here is a 747-residue protein sequence, read N- to C-terminus: Protein MTSS 2 (747 aa).

One can recognise an IMD domain in the interval M1 to S252. Residues E135–D159 adopt a coiled-coil conformation. Low complexity-rich tracts occupy residues W256–S284, S321–S332, and T349–S367. 4 disordered regions span residues W256–S302, A318–S441, L457–N522, and P543–P599. A Phosphothreonine modification is found at T260. S264 carries the post-translational modification Phosphoserine. Polar residues predominate over residues V368–W378. Residues D397–E406 are compositionally biased toward basic and acidic residues. A Phosphoserine modification is found at S441. The span at S466 to T479 shows a compositional bias: low complexity. Over residues P480–S492 the composition is skewed to polar residues. Phosphoserine occurs at positions 579, 601, 612, 624, 634, and 639. Disordered stretches follow at residues L638–Q664 and G691–A720. T643 carries the phosphothreonine modification. Low complexity-rich tracts occupy residues G646 to G659 and P696 to T707. Residues P719–T736 form the WH2 domain.

It belongs to the MTSS family. As to quaternary structure, interacts (via IMD domain) with RAC1; this interaction may be important to potentiate PDGF-induced RAC1 activation.

It is found in the cytoplasm. The protein resides in the cell projection. The protein localises to the ruffle. Functionally, involved in plasma membrane dynamics. Potentiated PDGF-mediated formation of membrane ruffles and lamellipodia in fibroblasts, acting via RAC1 activation. May function in actin bundling. The sequence is that of Protein MTSS 2 from Homo sapiens (Human).